Here is a 206-residue protein sequence, read N- to C-terminus: Small ribosomal subunit protein uS4 (206 aa).

Positions 96–156 constitute an S4 RNA-binding domain; that stretch reads GRLDNVVYRM…EKAKKQSRVK (61 aa).

The protein belongs to the universal ribosomal protein uS4 family. In terms of assembly, part of the 30S ribosomal subunit. Contacts protein S5. The interaction surface between S4 and S5 is involved in control of translational fidelity.

One of the primary rRNA binding proteins, it binds directly to 16S rRNA where it nucleates assembly of the body of the 30S subunit. Functionally, with S5 and S12 plays an important role in translational accuracy. This is Small ribosomal subunit protein uS4 from Cronobacter sakazakii (strain ATCC BAA-894) (Enterobacter sakazakii).